The primary structure comprises 256 residues: Small ribosomal subunit protein eS1 (256 aa).

Ala-2 is subject to N-acetylalanine; partial.

It belongs to the eukaryotic ribosomal protein eS1 family. As to quaternary structure, component of the small ribosomal subunit. Mature ribosomes consist of a small (40S) and a large (60S) subunit. The 40S subunit contains about 33 different proteins and 1 molecule of RNA (18S). The 60S subunit contains about 49 different proteins and 3 molecules of RNA (25S, 5.8S and 5S).

Its subcellular location is the cytoplasm. In Fusarium vanettenii (strain ATCC MYA-4622 / CBS 123669 / FGSC 9596 / NRRL 45880 / 77-13-4) (Fusarium solani subsp. pisi), this protein is Small ribosomal subunit protein eS1.